Here is a 109-residue protein sequence, read N- to C-terminus: Cytochrome c oxidase subunit 6A1, mitochondrial (109 aa).

A mitochondrion-targeting transit peptide spans 1 to 24; the sequence is MAAAAGSRVFGLLGRSRLQLSRCM. Over 25–34 the chain is Mitochondrial matrix; that stretch reads SSGAHGEEGS. Residues 35 to 59 traverse the membrane as a helical segment; the sequence is ARMWKALTYFVALPGVGVSMLNVFL. Over 60–109 the chain is Mitochondrial intermembrane; sequence KSHHGEEERPEFVAYPHLRIRSKPFPWGDGNHTLFHNPHVNPLPTGYEDE.

Belongs to the cytochrome c oxidase subunit 6A family. As to quaternary structure, component of the cytochrome c oxidase (complex IV, CIV), a multisubunit enzyme composed of 14 subunits. The complex is composed of a catalytic core of 3 subunits MT-CO1, MT-CO2 and MT-CO3, encoded in the mitochondrial DNA, and 11 supernumerary subunits COX4I1 (or COX4I2), COX5A, COX5B, COX6A2 (or COX6A1), COX6B1 (or COX6B2), COX6C, COX7A1 (or COX7A2), COX7B, COX7C, COX8B and NDUFA4, which are encoded in the nuclear genome. The complex exists as a monomer or a dimer and forms supercomplexes (SCs) in the inner mitochondrial membrane with NADH-ubiquinone oxidoreductase (complex I, CI) and ubiquinol-cytochrome c oxidoreductase (cytochrome b-c1 complex, complex III, CIII), resulting in different assemblies (supercomplex SCI(1)III(2)IV(1) and megacomplex MCI(2)III(2)IV(2)).

It localises to the mitochondrion inner membrane. Its pathway is energy metabolism; oxidative phosphorylation. In terms of biological role, component of the cytochrome c oxidase, the last enzyme in the mitochondrial electron transport chain which drives oxidative phosphorylation. The respiratory chain contains 3 multisubunit complexes succinate dehydrogenase (complex II, CII), ubiquinol-cytochrome c oxidoreductase (cytochrome b-c1 complex, complex III, CIII) and cytochrome c oxidase (complex IV, CIV), that cooperate to transfer electrons derived from NADH and succinate to molecular oxygen, creating an electrochemical gradient over the inner membrane that drives transmembrane transport and the ATP synthase. Cytochrome c oxidase is the component of the respiratory chain that catalyzes the reduction of oxygen to water. Electrons originating from reduced cytochrome c in the intermembrane space (IMS) are transferred via the dinuclear copper A center (CU(A)) of subunit 2 and heme A of subunit 1 to the active site in subunit 1, a binuclear center (BNC) formed by heme A3 and copper B (CU(B)). The BNC reduces molecular oxygen to 2 water molecules unsing 4 electrons from cytochrome c in the IMS and 4 protons from the mitochondrial matrix. This is Cytochrome c oxidase subunit 6A1, mitochondrial (COX6A1) from Bos taurus (Bovine).